The primary structure comprises 98 residues: MNPSEVASAGIHPIELCVHSILSSNLEGIYQAITELRESQALLVMKFNQVKKSFMDEQELLQEEGSLKEELARVNQLKKRLDKLTELYAELARKCGAL.

Residues 55–98 (MDEQELLQEEGSLKEELARVNQLKKRLDKLTELYAELARKCGAL) are a coiled coil.

Belongs to the SNAPIN family. Component of the biogenesis of lysosome-related organelles complex-1 (BLOC-1).

It is found in the endosome. Functionally, component of the biogenesis of lysosome-related organelles complex-1 (BLOC-1), a complex involved in endosomal cargo sorting. In Eremothecium gossypii (strain ATCC 10895 / CBS 109.51 / FGSC 9923 / NRRL Y-1056) (Yeast), this protein is Biogenesis of lysosome-related organelles complex 1 subunit SNN1 (SNN1).